We begin with the raw amino-acid sequence, 623 residues long: Transketolase (623 aa).

N-acetylmethionine is present on Met1. Position 3 is a phosphoserine (Ser3). An N6-acetyllysine mark is found at Lys6 and Lys11. His37 is a substrate binding site. Thiamine diphosphate-binding residues include Ser40 and His77. At Ser104 the chain carries Phosphoserine. Position 123–125 (Gly123–Leu125) interacts with thiamine diphosphate. An N6-acetyllysine modification is found at Lys144. A Mg(2+)-binding site is contributed by Asp155. Thiamine diphosphate-binding residues include Gly156 and Asn185. Asn185 and Leu187 together coordinate Mg(2+). Lys204, Lys232, and Lys241 each carry N6-acetyllysine. Thiamine diphosphate contacts are provided by Lys244 and His258. A substrate-binding site is contributed by His258. Residue Lys260 is modified to N6-acetyllysine. Tyr275 carries the phosphotyrosine modification. Phosphothreonine is present on Thr287. At Ser295 the chain carries Phosphoserine. 2 residues coordinate substrate: Arg318 and Ser345. A Phosphoserine modification is found at Ser345. Residue Lys352 forms a Glycyl lysine isopeptide (Lys-Gly) (interchain with G-Cter in SUMO2) linkage. The active-site Proton donor is Glu366. A thiamine diphosphate-binding site is contributed by Phe392. Residues His416 and Asp424 each contribute to the substrate site. Gln428 is a thiamine diphosphate binding site. Arg474 contributes to the substrate binding site. Lys538 and Lys603 each carry N6-acetyllysine.

Belongs to the transketolase family. In terms of assembly, homodimer. It depends on Mg(2+) as a cofactor. Requires Ca(2+) as cofactor. The cofactor is Mn(2+). Co(2+) is required as a cofactor. Thiamine diphosphate serves as cofactor.

The catalysed reaction is D-sedoheptulose 7-phosphate + D-glyceraldehyde 3-phosphate = aldehydo-D-ribose 5-phosphate + D-xylulose 5-phosphate. Functionally, catalyzes the transfer of a two-carbon ketol group from a ketose donor to an aldose acceptor, via a covalent intermediate with the cofactor thiamine pyrophosphate. This chain is Transketolase (TKT), found in Homo sapiens (Human).